The chain runs to 27 residues: Nemertide alpha-8 (27 aa).

Cystine bridges form between cysteine 2–cysteine 16, cysteine 9–cysteine 20, and cysteine 15–cysteine 26.

This sequence belongs to the nemertide family. In terms of tissue distribution, confined to the epidermis and to the mucus layer.

It localises to the secreted. Functionally, highly potent toxin against both insect and some mammalian sodium channels (Nav). It potently inhibits inactivation of insect sodium channels of B.germanica (BgNav1) and also delays the inactivation of mammalian Nav with potent activity on Nav1.3/SCN3A and Nav1.4/SCN4A. 1 uM is enough to completely inhibits the inactivation, resulting in sustained non-inactivating currents. In addition, the toxin significantly enhances the recovery from inactivation, and the open state is not required for the toxin to interact with the channel. In vivo, injection into brine shrimp (Artemia salina) stops movement or causes death after 24 hours (EC(50)=0.4 uM). The protein is Nemertide alpha-8 of Riseriellus occultus (Ribbon worm).